The primary structure comprises 249 residues: Proteasome subunit alpha (249 aa).

Belongs to the peptidase T1A family. The 20S proteasome core is composed of 14 alpha and 14 beta subunits that assemble into four stacked heptameric rings, resulting in a barrel-shaped structure. The two inner rings, each composed of seven catalytic beta subunits, are sandwiched by two outer rings, each composed of seven alpha subunits. The catalytic chamber with the active sites is on the inside of the barrel. Has a gated structure, the ends of the cylinder being occluded by the N-termini of the alpha-subunits. Is capped at one or both ends by the proteasome regulatory ATPase, PAN.

Its subcellular location is the cytoplasm. The formation of the proteasomal ATPase PAN-20S proteasome complex, via the docking of the C-termini of PAN into the intersubunit pockets in the alpha-rings, triggers opening of the gate for substrate entry. Interconversion between the open-gate and close-gate conformations leads to a dynamic regulation of the 20S proteasome proteolysis activity. In terms of biological role, component of the proteasome core, a large protease complex with broad specificity involved in protein degradation. This Methanosarcina barkeri (strain Fusaro / DSM 804) protein is Proteasome subunit alpha.